Consider the following 196-residue polypeptide: Small ribosomal subunit protein uS4c (196 aa).

The region spanning 82-143 (MRLDNILFRL…KQKSKALIQN (62 aa)) is the S4 RNA-binding domain.

Belongs to the universal ribosomal protein uS4 family. In terms of assembly, part of the 30S ribosomal subunit. Contacts protein S5. The interaction surface between S4 and S5 is involved in control of translational fidelity.

It is found in the plastid. Its subcellular location is the chloroplast. Functionally, one of the primary rRNA binding proteins, it binds directly to 16S rRNA where it nucleates assembly of the body of the 30S subunit. With S5 and S12 plays an important role in translational accuracy. The sequence is that of Small ribosomal subunit protein uS4c (rps4) from Patersonia sp. (strain Lejeune 1997).